A 765-amino-acid chain; its full sequence is Alpha,alpha-trehalose phosphorylase (765 aa).

352–353 serves as a coordination point for substrate; sequence WD. Glutamate 479 serves as the catalytic Proton donor. Substrate is bound at residue 591-592; it reads KQ.

Belongs to the glycosyl hydrolase 65 family. Homodimer.

The catalysed reaction is alpha,alpha-trehalose + phosphate = beta-D-glucose 1-phosphate + D-glucose. Its pathway is glycan degradation; trehalose degradation. Functionally, catalyzes the reversible phosphorolytic cleavage of trehalose. Phosphorolysis is specific for trehalose. In Geobacillus stearothermophilus (Bacillus stearothermophilus), this protein is Alpha,alpha-trehalose phosphorylase (treP).